We begin with the raw amino-acid sequence, 446 residues long: N-succinylarginine dihydrolase (446 aa).

Substrate contacts are provided by residues 19–28 (AGLSFGNVAS), Asn110, and 137–138 (HR). Glu174 is an active-site residue. Arg213 contributes to the substrate binding site. The active site involves His249. The substrate site is built by Asp251 and Asn364. Cys370 (nucleophile) is an active-site residue.

The protein belongs to the succinylarginine dihydrolase family. As to quaternary structure, homodimer.

It carries out the reaction N(2)-succinyl-L-arginine + 2 H2O + 2 H(+) = N(2)-succinyl-L-ornithine + 2 NH4(+) + CO2. It functions in the pathway amino-acid degradation; L-arginine degradation via AST pathway; L-glutamate and succinate from L-arginine: step 2/5. In terms of biological role, catalyzes the hydrolysis of N(2)-succinylarginine into N(2)-succinylornithine, ammonia and CO(2). In Burkholderia orbicola (strain MC0-3), this protein is N-succinylarginine dihydrolase.